A 496-amino-acid polypeptide reads, in one-letter code: Aldehyde dehydrogenase (496 aa).

Active-site residues include Glu-263 and Cys-296.

The protein belongs to the aldehyde dehydrogenase family.

The protein resides in the cytoplasm. The catalysed reaction is an aldehyde + NAD(+) + H2O = a carboxylate + NADH + 2 H(+). The polypeptide is Aldehyde dehydrogenase (CLAH10) (Davidiella tassiana (Mycosphaerella tassiana)).